Here is a 238-residue protein sequence, read N- to C-terminus: Ras association domain-containing protein 3 (238 aa).

S2 carries the post-translational modification N-acetylserine. The interval 26-48 (RAPQGKPRSGQQDVEKEKETHSY) is disordered. A compositionally biased stretch (basic and acidic residues) spans 38 to 48 (DVEKEKETHSY). The 108-residue stretch at 79 to 186 (YTGFIKVQME…TLSFVLREHE (108 aa)) folds into the Ras-associating domain. Residues 187 to 234 (IGEWEAFSLPELQNFLRILDKEEDEQLQNLKRRYTAYRQKLEEALREV) form the SARAH domain.

In terms of tissue distribution, widely expressed.

Its subcellular location is the cytoplasm. The protein localises to the cytoskeleton. In Homo sapiens (Human), this protein is Ras association domain-containing protein 3 (RASSF3).